Consider the following 116-residue polypeptide: Large ribosomal subunit protein bL20 (116 aa).

The protein belongs to the bacterial ribosomal protein bL20 family.

Its function is as follows. Binds directly to 23S ribosomal RNA and is necessary for the in vitro assembly process of the 50S ribosomal subunit. It is not involved in the protein synthesizing functions of that subunit. The protein is Large ribosomal subunit protein bL20 of Synechococcus elongatus (strain ATCC 33912 / PCC 7942 / FACHB-805) (Anacystis nidulans R2).